Reading from the N-terminus, the 221-residue chain is DNA repair and recombination protein RadB (221 aa).

It belongs to the eukaryotic RecA-like protein family. RadB subfamily.

Involved in DNA repair and in homologous recombination. May regulate the cleavage reactions of the branch-structured DNA. Has a very weak ATPase activity that is not stimulated by DNA. Binds DNA but does not promote DNA strands exchange. The chain is DNA repair and recombination protein RadB from Thermococcus gammatolerans (strain DSM 15229 / JCM 11827 / EJ3).